The chain runs to 309 residues: GDP-6-deoxy-D-mannose reductase (309 aa).

NADP(+) contacts are provided by residues 11 to 12 (FV), Arg32, 47 to 48 (DI), and 71 to 73 (AKS). 114–115 (SS) contributes to the substrate binding site. Tyr140 is a binding site for NADP(+). Residues Asn169, Asp183, Arg209, and 269–272 (RPSE) contribute to the substrate site.

This sequence belongs to the NAD(P)-dependent epimerase/dehydratase family. GDP-6-deoxy-D-mannose reductase subfamily.

It carries out the reaction GDP-alpha-D-rhamnose + NAD(+) = GDP-4-dehydro-alpha-D-rhamnose + NADH + H(+). The enzyme catalyses GDP-alpha-D-rhamnose + NADP(+) = GDP-4-dehydro-alpha-D-rhamnose + NADPH + H(+). Its function is as follows. Reductase that catalyzes the conversion of GDP-6-deoxy-D-mannose to GDP-4-dehydro-6-deoxy-D-mannose (GDP-D-rhamnose). This is GDP-6-deoxy-D-mannose reductase (rmd) from Aneurinibacillus thermoaerophilus.